The chain runs to 246 residues: Probable transcriptional regulatory protein YebC (246 aa).

The interval 1–20 (MAGHSKWANTRHRKAAQDAK) is disordered.

It belongs to the TACO1 family.

The protein localises to the cytoplasm. This Shigella boydii serotype 4 (strain Sb227) protein is Probable transcriptional regulatory protein YebC.